The primary structure comprises 347 residues: RNA 3'-terminal phosphate cyclase (347 aa).

ATP is bound by residues Gln-101 and 286 to 289; that span reads HMAD. Residue His-312 is the Tele-AMP-histidine intermediate of the active site.

The protein belongs to the RNA 3'-terminal cyclase family. Type 1 subfamily.

It is found in the cytoplasm. It catalyses the reaction a 3'-end 3'-phospho-ribonucleotide-RNA + ATP = a 3'-end 2',3'-cyclophospho-ribonucleotide-RNA + AMP + diphosphate. In terms of biological role, catalyzes the conversion of 3'-phosphate to a 2',3'-cyclic phosphodiester at the end of RNA. The mechanism of action of the enzyme occurs in 3 steps: (A) adenylation of the enzyme by ATP; (B) transfer of adenylate to an RNA-N3'P to produce RNA-N3'PP5'A; (C) and attack of the adjacent 2'-hydroxyl on the 3'-phosphorus in the diester linkage to produce the cyclic end product. The biological role of this enzyme is unknown but it is likely to function in some aspects of cellular RNA processing. The sequence is that of RNA 3'-terminal phosphate cyclase from Pyrobaculum neutrophilum (strain DSM 2338 / JCM 9278 / NBRC 100436 / V24Sta) (Thermoproteus neutrophilus).